We begin with the raw amino-acid sequence, 144 residues long: Bacilliredoxin SSP1311 (144 aa).

Belongs to the bacilliredoxin family.

This chain is Bacilliredoxin SSP1311, found in Staphylococcus saprophyticus subsp. saprophyticus (strain ATCC 15305 / DSM 20229 / NCIMB 8711 / NCTC 7292 / S-41).